The primary structure comprises 107 residues: Large ribosomal subunit protein eL21 (107 aa).

This sequence belongs to the eukaryotic ribosomal protein eL21 family.

This is Large ribosomal subunit protein eL21 (rpl21e) from Aeropyrum pernix (strain ATCC 700893 / DSM 11879 / JCM 9820 / NBRC 100138 / K1).